A 343-amino-acid polypeptide reads, in one-letter code: Glyceraldehyde-3-phosphate dehydrogenase (343 aa).

Residues 13–14 (TI) and Gly-111 each bind NAD(+). 140-142 (SCN) is a binding site for D-glyceraldehyde 3-phosphate. The Nucleophile role is filled by Cys-141. Arg-169 is an NAD(+) binding site. D-glyceraldehyde 3-phosphate is bound at residue 195–196 (HA). Gln-303 contacts NAD(+).

Belongs to the glyceraldehyde-3-phosphate dehydrogenase family. Homotetramer.

The protein resides in the cytoplasm. It carries out the reaction D-glyceraldehyde 3-phosphate + phosphate + NADP(+) = (2R)-3-phospho-glyceroyl phosphate + NADPH + H(+). The enzyme catalyses D-glyceraldehyde 3-phosphate + phosphate + NAD(+) = (2R)-3-phospho-glyceroyl phosphate + NADH + H(+). Its pathway is carbohydrate degradation; glycolysis; pyruvate from D-glyceraldehyde 3-phosphate: step 1/5. The protein is Glyceraldehyde-3-phosphate dehydrogenase of Sulfurisphaera tokodaii (strain DSM 16993 / JCM 10545 / NBRC 100140 / 7) (Sulfolobus tokodaii).